Reading from the N-terminus, the 379-residue chain is Lipid-A-disaccharide synthase (379 aa).

Belongs to the LpxB family.

It catalyses the reaction a lipid X + a UDP-2-N,3-O-bis[(3R)-3-hydroxyacyl]-alpha-D-glucosamine = a lipid A disaccharide + UDP + H(+). The protein operates within bacterial outer membrane biogenesis; LPS lipid A biosynthesis. In terms of biological role, condensation of UDP-2,3-diacylglucosamine and 2,3-diacylglucosamine-1-phosphate to form lipid A disaccharide, a precursor of lipid A, a phosphorylated glycolipid that anchors the lipopolysaccharide to the outer membrane of the cell. The sequence is that of Lipid-A-disaccharide synthase from Idiomarina loihiensis (strain ATCC BAA-735 / DSM 15497 / L2-TR).